Here is a 544-residue protein sequence, read N- to C-terminus: MDKYTALIHDENFSTLTLNVSRYPKSLAYWEKLLNYIVKASAPICKSTEPQLLKLIRCTYSSMLNEFPYLENYYIDFALLEYKLGNVSMSHKIFQRGLQAFNQRSLLLWTSYLKFCNNVISHQKQLFKKYETAEEYVGLHFFSGEFWDLYLEQISSRCTSSKKYWNVLRKILEIPLHSFSKFYALWLQRIDDIMDLKQLSQLTSKDELLKKLKIDINYSGRKGPYLQDAKKKLKKITKEMYMVVQYQVLEIYSIFESKIYINYYTSPETLVSSDEIETWIKYLDYTITLQTDSLTHLNFQRALLPLAHYDLVWIKYSKWLINSKNDLLGAKNVLLMGLKFSLKKTEIIKLLYSVICKLNEYVLLRNLLEKIESSYSDNVENVDDFEIFWDYLQFKTFCQNSLYSSRYSDSQSNGLLNKELFDKVWKRLSCKEKKSGQEILLNNLVQFYSKDTVEFVEKNIFQKIIEFGWEYYLQNGMFWNCYCRLIYFDTSRSYLDKRQYIVRKIWPQIDKKFAQSVLPSLTEFCESYFPEEMDTLEEMFTEEP.

HAT repeat units lie at residues Leu7–Lys39, Gln51–Lys83, Gly85–Asn118, Ser121–Ser156, and Lys163–Asp195. The Nuclear localization signal motif lies at Lys230–Lys235. HAT repeat units lie at residues Phe255–Thr288, Gln290–Asn322, Asn366–Phe397, and Val456–Phe488.

Component of the 18S U1 snRNP particle, a subcomplex of the spliceosome.

The protein resides in the nucleus. Functionally, essential component of the U1 snRNP particle, which recognizes and binds the 5'-splice site of pre-mRNA. Together with other non-snRNP factors, U1 snRNP forms the spliceosomal commitment complex, that targets pre-mRNA to the splicing pathway. U1 snRNP is cotranscriptionally recruited to intron-containing genes. Required for U1 snRNP biogenesis. In Saccharomyces cerevisiae (strain ATCC 204508 / S288c) (Baker's yeast), this protein is U1 small nuclear ribonucleoprotein component PRP42 (PRP42).